Reading from the N-terminus, the 150-residue chain is Calmodulin-like protein 7 (150 aa).

EF-hand domains lie at 1–36 (MDPT…LGIY), 37–72 (IPDK…IMDE), 75–110 (EEEE…LGLK), and 113–148 (KTLD…GGFN). The Ca(2+) site is built by D14, N16, D18, T20, E25, D50, N52, D54, C56, E61, D88, N90, D92, E99, D126, D128, D130, R132, and E137.

This sequence belongs to the calmodulin family.

Potential calcium sensor. This chain is Calmodulin-like protein 7 (CML7), found in Arabidopsis thaliana (Mouse-ear cress).